We begin with the raw amino-acid sequence, 396 residues long: Anticodon nuclease (396 aa).

Anticodon endonuclease (ACNase) that triggers the cleavage ligation of tRNA(Lys). It is activated by T4 stp protein and masked by the prrD protein (the endonuclease subunit of EcoprrI). The prr locus restricts phage T4 mutants lacking polynucleotide kinase or RNA ligase; T4 mutants lacking these genes manifest a T4-induced anticodon nuclease (ACNase). It is thought that Stp and other T4-encoded ACNase factors counteract the masking agents, thus activating the latent ACNase. The sequence is that of Anticodon nuclease from Escherichia coli.